Consider the following 274-residue polypeptide: Penicillin-insensitive murein endopeptidase (274 aa).

A signal peptide spans 1–19 (MNKTAIALLALLASSASLA). 3 cysteine pairs are disulfide-bonded: C44–C265, C187–C235, and C216–C223. Zn(2+) is bound by residues H110, H113, D120, D147, H150, and H211. Residues 227 to 274 (PLPPPGDGCGAELQSWFEPPKPGTTKPEKKTPPPLPPSCQALLDEHVI) are disordered.

It belongs to the peptidase M74 family. Dimer. The cofactor is Zn(2+).

The protein localises to the periplasm. Its function is as follows. Murein endopeptidase that cleaves the D-alanyl-meso-2,6-diamino-pimelyl amide bond that connects peptidoglycan strands. Likely plays a role in the removal of murein from the sacculus. In Escherichia coli O9:H4 (strain HS), this protein is Penicillin-insensitive murein endopeptidase.